A 117-amino-acid chain; its full sequence is Snaclec CHH-B subunit beta (117 aa).

Cystine bridges form between Cys2–Cys13, Cys30–Cys115, and Cys92–Cys107. One can recognise a C-type lectin domain in the interval 9–116; it reads YEGHCYRVFQ…CSKTHNVVCK (108 aa).

The protein belongs to the snaclec family. In terms of assembly, heterodimer of subunits alpha and beta; disulfide-linked. Expressed by the venom gland.

It localises to the secreted. Its function is as follows. Binds to the subunit GPIbalpha (GP1BA) of the platelet GPIb/V/IX receptor system. It inhibits ristocetin- and vWF-induced platelet aggregation in platelet-rich plasma by inhibiting the binding of vWF to GPIbalpha. The protein is Snaclec CHH-B subunit beta of Crotalus horridus (Timber rattlesnake).